A 120-amino-acid polypeptide reads, in one-letter code: Protein crumbs homolog 3 (120 aa).

A signal peptide spans 1 to 26 (MANPGLGLLLALGLPFLLARWGRAWG). Residues 27–59 (QIQTTSANENSTVLPSSTSSSSDGNLRPEAITA) are Extracellular-facing. Asparagine 36 carries N-linked (GlcNAc...) asparagine glycosylation. Residues 60 to 80 (IIVVFSLLAALLLAVGLALLV) traverse the membrane as a helical segment. Residues 81–120 (RKLREKRQTEGTYRPSSEEQVGARVPPTPNLKLPPEERLI) lie on the Cytoplasmic side of the membrane. An interaction with EPB41L5 region spans residues 84-120 (REKRQTEGTYRPSSEEQVGARVPPTPNLKLPPEERLI). A disordered region spans residues 87 to 120 (RQTEGTYRPSSEEQVGARVPPTPNLKLPPEERLI). The span at 90-99 (EGTYRPSSEE) shows a compositional bias: polar residues. The PDZ-binding signature appears at 117–120 (ERLI).

In terms of assembly, component of a complex composed of CRB3, PALS1 and PATJ. Interacts (via C-terminus) with PALS1 (via PDZ domain). Interacts with PARD6A. Interacts (via intracellular domain) with EPB41L5. Interacts with WDR83. In terms of tissue distribution, preferentially expressed in epithelial tissues. Expressed at high levels in lung, kidney, and colon. Expressed at high levels in retina, colon and mammary glands. Moderately expressed in liver, spleen, pancreas and prostate. Moderately to weakly expressed in the placenta. Weakly expressed in skeletal muscle and small intestine.

It localises to the apical cell membrane. The protein localises to the cell junction. It is found in the tight junction. Its function is as follows. Involved in the establishment of cell polarity in mammalian epithelial cells. Regulates the morphogenesis of tight junctions. Involved in promoting phosphorylation and cytoplasmic retention of transcriptional coactivators YAP1 and WWTR1/TAZ which leads to suppression of TGFB1-dependent transcription of target genes such as CCN2/CTGF, SERPINE1/PAI1, SNAI1/SNAIL1 and SMAD7. This chain is Protein crumbs homolog 3, found in Homo sapiens (Human).